Reading from the N-terminus, the 216-residue chain is Probable GTP-binding protein EngB (216 aa).

The 178-residue stretch at 37 to 214 folds into the EngB-type G domain; sequence QGLEVAFAGR…RAAIIKLVAE (178 aa). GTP contacts are provided by residues 45–52, 72–76, 92–95, 159–162, and 193–195; these read GRSNVGKS, GRTQE, DMPG, TKAD, and TSS. Ser52 and Thr74 together coordinate Mg(2+).

Belongs to the TRAFAC class TrmE-Era-EngA-EngB-Septin-like GTPase superfamily. EngB GTPase family. Mg(2+) serves as cofactor.

Functionally, necessary for normal cell division and for the maintenance of normal septation. The sequence is that of Probable GTP-binding protein EngB from Rhodopseudomonas palustris (strain BisA53).